Here is a 299-residue protein sequence, read N- to C-terminus: Oxygen-dependent coproporphyrinogen-III oxidase (299 aa).

Position 92 (serine 92) interacts with substrate. Residues histidine 96 and histidine 106 each coordinate Mn(2+). Histidine 106 functions as the Proton donor in the catalytic mechanism. A substrate-binding site is contributed by 108 to 110 (NVR). The Mn(2+) site is built by histidine 145 and histidine 175. The segment at 240 to 275 (YVEFNLVWDRGTLFGLQTGGRTESILMSMPPLVRWE) is important for dimerization. Residue 258-260 (GGR) coordinates substrate.

The protein belongs to the aerobic coproporphyrinogen-III oxidase family. In terms of assembly, homodimer. Requires Mn(2+) as cofactor.

It is found in the cytoplasm. The enzyme catalyses coproporphyrinogen III + O2 + 2 H(+) = protoporphyrinogen IX + 2 CO2 + 2 H2O. Its pathway is porphyrin-containing compound metabolism; protoporphyrin-IX biosynthesis; protoporphyrinogen-IX from coproporphyrinogen-III (O2 route): step 1/1. Its function is as follows. Involved in the heme biosynthesis. Catalyzes the aerobic oxidative decarboxylation of propionate groups of rings A and B of coproporphyrinogen-III to yield the vinyl groups in protoporphyrinogen-IX. This is Oxygen-dependent coproporphyrinogen-III oxidase from Escherichia coli O7:K1 (strain IAI39 / ExPEC).